We begin with the raw amino-acid sequence, 299 residues long: Centriolar and ciliogenesis-associated protein HYLS1 (299 aa).

Position 179 is a phosphoserine (S179).

Belongs to the HYLS1 family.

It localises to the cytoplasm. Its subcellular location is the cell projection. The protein resides in the cilium. It is found in the cytoskeleton. The protein localises to the microtubule organizing center. It localises to the centrosome. Its subcellular location is the centriole. In terms of biological role, plays a role in ciliogenesis. This is Centriolar and ciliogenesis-associated protein HYLS1 from Homo sapiens (Human).